The primary structure comprises 760 residues: 5-methyltetrahydropteroyltriglutamate--homocysteine methyltransferase (760 aa).

5-methyltetrahydropteroyltri-L-glutamate contacts are provided by residues 17–20 and Lys118; that span reads RELK. Residues 436–438 and Glu489 contribute to the L-homocysteine site; that span reads IGS. L-methionine contacts are provided by residues 436-438 and Glu489; that span reads IGS. Residues 520-521 and Trp566 each bind 5-methyltetrahydropteroyltri-L-glutamate; that span reads RC. Asp604 provides a ligand contact to L-homocysteine. Asp604 contributes to the L-methionine binding site. Position 610 (Glu610) interacts with 5-methyltetrahydropteroyltri-L-glutamate. Residues His646, Cys648, and Glu670 each coordinate Zn(2+). The active-site Proton donor is the His699. Residue Cys731 coordinates Zn(2+).

Belongs to the vitamin-B12 independent methionine synthase family. The cofactor is Zn(2+).

It catalyses the reaction 5-methyltetrahydropteroyltri-L-glutamate + L-homocysteine = tetrahydropteroyltri-L-glutamate + L-methionine. Its pathway is amino-acid biosynthesis; L-methionine biosynthesis via de novo pathway; L-methionine from L-homocysteine (MetE route): step 1/1. Catalyzes the transfer of a methyl group from 5-methyltetrahydrofolate to homocysteine resulting in methionine formation. The sequence is that of 5-methyltetrahydropteroyltriglutamate--homocysteine methyltransferase from Vibrio harveyi (Beneckea harveyi).